Here is a 221-residue protein sequence, read N- to C-terminus: Iron-sulfur cluster repair protein YtfE (221 aa).

The protein belongs to the RIC family. YtfE subfamily. In terms of assembly, homodimer.

It is found in the cytoplasm. Di-iron-containing protein involved in the repair of iron-sulfur clusters damaged by oxidative and nitrosative stress conditions. The protein is Iron-sulfur cluster repair protein YtfE of Pectobacterium atrosepticum (strain SCRI 1043 / ATCC BAA-672) (Erwinia carotovora subsp. atroseptica).